The following is a 427-amino-acid chain: Serine--tRNA ligase (427 aa).

233-235 contacts L-serine; that stretch reads TAE. 264–266 lines the ATP pocket; it reads RSE. Residue Glu-287 participates in L-serine binding. 351-354 lines the ATP pocket; it reads EISS. Ser-386 is a binding site for L-serine.

Belongs to the class-II aminoacyl-tRNA synthetase family. Type-1 seryl-tRNA synthetase subfamily. Homodimer. The tRNA molecule binds across the dimer.

It localises to the cytoplasm. The enzyme catalyses tRNA(Ser) + L-serine + ATP = L-seryl-tRNA(Ser) + AMP + diphosphate + H(+). It carries out the reaction tRNA(Sec) + L-serine + ATP = L-seryl-tRNA(Sec) + AMP + diphosphate + H(+). Its pathway is aminoacyl-tRNA biosynthesis; selenocysteinyl-tRNA(Sec) biosynthesis; L-seryl-tRNA(Sec) from L-serine and tRNA(Sec): step 1/1. Functionally, catalyzes the attachment of serine to tRNA(Ser). Is also able to aminoacylate tRNA(Sec) with serine, to form the misacylated tRNA L-seryl-tRNA(Sec), which will be further converted into selenocysteinyl-tRNA(Sec). This chain is Serine--tRNA ligase, found in Dechloromonas aromatica (strain RCB).